The sequence spans 641 residues: DNA mismatch repair protein MutL (641 aa).

Positions 345–445 (PAAVAPPAPA…GDTSLGDTSP (101 aa)) are disordered. Residues 419–429 (PRTEPATRTGE) are compositionally biased toward basic and acidic residues. Residues 432–442 (GISSGDTSLGD) show a composition bias toward polar residues.

Belongs to the DNA mismatch repair MutL/HexB family.

In terms of biological role, this protein is involved in the repair of mismatches in DNA. It is required for dam-dependent methyl-directed DNA mismatch repair. May act as a 'molecular matchmaker', a protein that promotes the formation of a stable complex between two or more DNA-binding proteins in an ATP-dependent manner without itself being part of a final effector complex. In Azotobacter vinelandii (strain DJ / ATCC BAA-1303), this protein is DNA mismatch repair protein MutL.